Here is a 219-residue protein sequence, read N- to C-terminus: UPF0173 metal-dependent hydrolase LSL_0324 (219 aa).

The protein belongs to the UPF0173 family.

In Ligilactobacillus salivarius (strain UCC118) (Lactobacillus salivarius), this protein is UPF0173 metal-dependent hydrolase LSL_0324.